A 538-amino-acid chain; its full sequence is MAEKLSDGSSIISVHPRPSKGFSSKLLDLLERLVVKLMHDASLPLHYLSGNFAPIRDETPPVKDLPVHGFLPECLNGEFVRVGPNPKFDAVAGYHWFDGDGMIHGVRIKDGKATYVSRYVKTSRLKQEEFFGAAKFMKIGDLKGFFGLLMVNVQQLRTKLKILDNTYGNGTANTALVYHHGKLLALQEADKPYVIKVLEDGDLQTLGIIDYDKRLTHSFTAHPKVDPVTGEMFTFGYSHTPPYLTYRVISKDGIMHDPVPITISEPIMMHDFAITETYAIFMDLPMHFRPKEMVKEKKMIYSFDPTKKARFGVLPRYAKDELMIRWFELPNCFIFHNANAWEEEDEVVLITCRLENPDLDMVSGKVKEKLENFGNELYEMRFNMKTGSASQKKLSASAVDFPRINECYTGKKQRYVYGTILDSIAKVTGIIKFDLHAEAETGKRMLEVGGNIKGIYDLGEGRYGSEAIYVPRETAEEDDGYLIFFVHDENTGKSCVTVIDAKTMSAEPVAVVELPHRVPYGFHALFVTEEQLQEQTLI.

Residues H222, H270, H336, and H523 each coordinate Fe cation.

Belongs to the carotenoid oxygenase family. Homodimer. Requires Fe(2+) as cofactor. As to expression, high expression in flowers and siliques. Also detected in stems, leaves and roots.

Its subcellular location is the cytoplasm. The catalysed reaction is all-trans-zeaxanthin + 2 O2 = 4,9-dimethyldodeca-2,4,6,8,10-pentaenedial + 2 (3R)-hydroxy-beta-ionone. Its function is as follows. Cleaves a variety of carotenoids symmetrically at both the 9-10 and 9'-10' double bonds. Active on beta,beta-carotene, lutein, zeaxanthin, all-trans-violaxanthin, 9-cis-violaxanthin and 9'-cis-neoxanthin. With most substrates, the carotenoid is symmetrically cleaved. Probably not involved in abscisic acid biosynthesis. The protein is Carotenoid 9,10(9',10')-cleavage dioxygenase 1 (CCD1) of Arabidopsis thaliana (Mouse-ear cress).